The following is an 871-amino-acid chain: Isoleucine--tRNA ligase (871 aa).

The short motif at 57–67 (PYANGNLHMGH) is the 'HIGH' region element. Glu-554 is an L-isoleucyl-5'-AMP binding site. Residues 595–599 (KMSKS) carry the 'KMSKS' region motif. Lys-598 is an ATP binding site.

Belongs to the class-I aminoacyl-tRNA synthetase family. IleS type 1 subfamily. In terms of assembly, monomer.

The protein resides in the cytoplasm. It catalyses the reaction tRNA(Ile) + L-isoleucine + ATP = L-isoleucyl-tRNA(Ile) + AMP + diphosphate. Functionally, catalyzes the attachment of isoleucine to tRNA(Ile). As IleRS can inadvertently accommodate and process structurally similar amino acids such as valine, to avoid such errors it has two additional distinct tRNA(Ile)-dependent editing activities. One activity is designated as 'pretransfer' editing and involves the hydrolysis of activated Val-AMP. The other activity is designated 'posttransfer' editing and involves deacylation of mischarged Val-tRNA(Ile). This Staphylococcus epidermidis protein is Isoleucine--tRNA ligase.